A 546-amino-acid chain; its full sequence is 2-isopropylmalate synthase (546 aa).

Residues Ile8 to Ser271 form the Pyruvate carboxyltransferase domain. Mn(2+) contacts are provided by Asp17, His208, His210, and Asn244. The segment at Gln408 to Asn546 is regulatory domain.

This sequence belongs to the alpha-IPM synthase/homocitrate synthase family. LeuA type 1 subfamily. As to quaternary structure, homodimer. Requires Mn(2+) as cofactor.

It localises to the cytoplasm. It catalyses the reaction 3-methyl-2-oxobutanoate + acetyl-CoA + H2O = (2S)-2-isopropylmalate + CoA + H(+). It functions in the pathway amino-acid biosynthesis; L-leucine biosynthesis; L-leucine from 3-methyl-2-oxobutanoate: step 1/4. Functionally, catalyzes the condensation of the acetyl group of acetyl-CoA with 3-methyl-2-oxobutanoate (2-ketoisovalerate) to form 3-carboxy-3-hydroxy-4-methylpentanoate (2-isopropylmalate). This is 2-isopropylmalate synthase from Prochlorococcus marinus (strain MIT 9312).